Consider the following 386-residue polypeptide: Cytochrome b (386 aa).

Transmembrane regions (helical) follow at residues 39–59 (FGSL…FLAM), 83–104 (FMLK…YIHM), 119–139 (WNIG…GYVL), and 184–204 (FFSL…LHIL). Heme b contacts are provided by histidine 89 and histidine 103. Heme b is bound by residues histidine 188 and histidine 202. Position 207 (histidine 207) interacts with a ubiquinone. A run of 4 helical transmembrane segments spans residues 232-252 (YKDL…CYFM), 294-314 (LGGV…PFIH), 326-346 (LGKI…WLGA), and 353-374 (YIMI…LVPL).

The protein belongs to the cytochrome b family. In terms of assembly, the main subunits of complex b-c1 are: cytochrome b, cytochrome c1 and the Rieske protein. Heme b is required as a cofactor.

It localises to the mitochondrion inner membrane. Its function is as follows. Component of the ubiquinol-cytochrome c reductase complex (complex III or cytochrome b-c1 complex) that is part of the mitochondrial respiratory chain. The b-c1 complex mediates electron transfer from ubiquinol to cytochrome c. Contributes to the generation of a proton gradient across the mitochondrial membrane that is then used for ATP synthesis. The polypeptide is Cytochrome b (MT-CYB) (Sarcophyton glaucum (Toadstool umbrella leather coral)).